The following is a 399-amino-acid chain: P2X purinoceptor 1 (399 aa).

Topologically, residues Met-1–Lys-28 are cytoplasmic. The chain crosses the membrane as a helical span at residues Val-29–Val-50. Residues Tyr-51 to Gly-338 are Extracellular-facing. Residues Lys-68, Lys-70, and Lys-140 each contribute to the CTP site. Residue Lys-70 participates in ATP binding. 3 cysteine pairs are disulfide-bonded: Cys-117/Cys-165, Cys-126/Cys-149, and Cys-132/Cys-159. N-linked (GlcNAc...) asparagine glycosylation is found at Asn-153 and Asn-184. A CTP-binding site is contributed by Thr-186. Thr-186 contacts ATP. Asn-210 carries N-linked (GlcNAc...) asparagine glycosylation. Cystine bridges form between Cys-217–Cys-227 and Cys-261–Cys-270. The ATP site is built by Ser-286, Asn-290, and Arg-292. Residues Asn-290 and Arg-292 each contribute to the CTP site. Asn-300 is a glycosylation site (N-linked (GlcNAc...) asparagine). Position 309 (Lys-309) interacts with CTP. Lys-309 is an ATP binding site. The tract at residues Thr-331 to Gly-338 is pore-forming motif. Residues Ile-339–Pro-358 traverse the membrane as a helical segment. Topologically, residues Lys-359–Ser-399 are cytoplasmic. A disordered region spans residues Met-374 to Ser-399. Residues Ala-385 to Ser-399 are compositionally biased toward polar residues. Ser-387 and Ser-388 each carry phosphoserine. Thr-389 is subject to Phosphothreonine.

Belongs to the P2X receptor family. Functional P2XRs are organized as homomeric and heteromeric trimers. Forms heterodimer with P2RX2. Forms heterodimer with P2RX4. Forms heterodimer with P2RX5. As to expression, expressed in smooth muscle of the bladder and arteries.

The protein resides in the cell membrane. The enzyme catalyses Ca(2+)(in) = Ca(2+)(out). It carries out the reaction K(+)(in) = K(+)(out). It catalyses the reaction Na(+)(in) = Na(+)(out). Its activity is regulated as follows. Activated by low concentrations of ATP (&lt;1 uM). Undergoes rapid desensitisation. Sensitives to the ATP agonist:alpha/beta-methylene-ATP. Modulated by cholesterol. ATP-gated nonselective transmembrane cation channel permeable to potassium, sodium and with relatively high calcium permeability. Furthermore, CTP functions as a weak affinity agonist for P2RX1. Plays a role in male fertility, bladder contraction and platelet aggregation. Specifically, plays an important role in neurogenic contraction of smooth muscle of the vas deferens, and therefore is essential for normal male reproductive function. In addition, contributes to smooth muscle contractions of the urinary bladder. On platelets, contributes to platelet activation and aggregation and thereby, also to thrombosis. On neutrophils, it is involved in chemotaxis and in mitigating the activation of circulating cells. In Mus musculus (Mouse), this protein is P2X purinoceptor 1 (P2rx1).